The primary structure comprises 119 residues: MAKVNQNIIKALEDEQLKTDVPAFGAGDTVVVQVKVKEGAKERLQAFEGVVIAKRNRGLHSAFTVRKISNGEGVERVFQTHSPLIDSVTVKRRGAVRRAKLYYLRERSGKSARIREKLN.

This sequence belongs to the bacterial ribosomal protein bL19 family.

In terms of biological role, this protein is located at the 30S-50S ribosomal subunit interface and may play a role in the structure and function of the aminoacyl-tRNA binding site. The sequence is that of Large ribosomal subunit protein bL19 from Pseudoalteromonas translucida (strain TAC 125).